Consider the following 144-residue polypeptide: Large ribosomal subunit protein uL15 (144 aa).

The tract at residues 1-54 (MRLNTLSPAAGAKHAPKRVGRGMGSGLGKTAGRGHKGQKSRSGGGVRPGFEGGQ) is disordered. Composition is skewed to gly residues over residues 21–31 (RGMGSGLGKTA) and 42–52 (SGGGVRPGFEG).

It belongs to the universal ribosomal protein uL15 family. In terms of assembly, part of the 50S ribosomal subunit.

Functionally, binds to the 23S rRNA. This chain is Large ribosomal subunit protein uL15, found in Shewanella oneidensis (strain ATCC 700550 / JCM 31522 / CIP 106686 / LMG 19005 / NCIMB 14063 / MR-1).